A 523-amino-acid polypeptide reads, in one-letter code: Sucrose 6(F)-phosphate phosphorylase (523 aa).

Residues aspartate 58, histidine 96, 221–223 (RLD), glutamate 264, 326–327 (HD), and lysine 434 each bind sucrose 6(F)-phosphate. Catalysis depends on aspartate 223, which acts as the Nucleophile. Glutamate 264 serves as the catalytic Proton donor/acceptor.

It belongs to the glycosyl hydrolase 13 family. Sucrose phosphorylase subfamily. Monomer.

It catalyses the reaction sucrose 6(F)-phosphate + phosphate = beta-D-fructose 6-phosphate + alpha-D-glucose 1-phosphate. Catalyzes the reversible phosphorolysis of sucrose 6(F)-phosphate into alpha-D-glucose 1-phosphate (Glc1P) and D-fructose 6-phosphate. May be involved in a new pathway for the degradation of sucrose, which could become phosphorylated on its fructose moiety during uptake via a PTS system. Shows strict specificity since it does not catalyze reactions with alternative substrates. In Ilumatobacter coccineus (strain NBRC 103263 / KCTC 29153 / YM16-304), this protein is Sucrose 6(F)-phosphate phosphorylase.